A 434-amino-acid polypeptide reads, in one-letter code: Putative nuclease OPG089 (434 aa).

Positions 33, 74, 168, 170, 196, and 198 each coordinate Mg(2+).

Belongs to the XPG/RAD2 endonuclease family. FEN1 subfamily. Mg(2+) is required as a cofactor.

It localises to the virion. Functionally, putative nuclease that seems to be required for double-strand break repair, homologous recombination, and production of full-length viral genomic DNA. The polypeptide is Putative nuclease OPG089 (OPG089) (Homo sapiens (Human)).